Consider the following 131-residue polypeptide: MGVGTKVLVITTMAICLISSAAYASEGTATFYTPPYVPSACNGYKNDGVMIAAASYAIWNNGAVCNKSFRVKCTGATNQGTPHPCRGGSVLVKIVDLCPAGCQATIDLSQEAFSQIANPDAGKIKIEFNQA.

The first 24 residues, 1–24 (MGVGTKVLVITTMAICLISSAAYA), serve as a signal peptide directing secretion. The Expansin-like EG45; incomplete domain maps to 27-131 (GTATFYTPPY…GKIKIEFNQA (105 aa)). The cysteines at positions 73 and 85 are disulfide-linked.

In terms of tissue distribution, expressed in the outer layer of xylem and the vascular cambial zone of roots, in shoot cambium, but not in leaves.

It is found in the secreted. Functionally, might have a systemic role in water and solute homeostasis. Has no expansin-like activity. This chain is EG45-like domain containing protein (CjBAp12), found in Citrus jambhiri (Rough lemon).